A 323-amino-acid chain; its full sequence is UDP-glucuronate 4-epimerase (323 aa).

Position 11–13 (11–13) interacts with NAD(+); that stretch reads GFI. Tyr-152 acts as the Proton acceptor in catalysis. Position 156 (Lys-156) interacts with NAD(+).

This sequence belongs to the NAD(P)-dependent epimerase/dehydratase family. The cofactor is NAD(+).

The catalysed reaction is UDP-alpha-D-glucuronate = UDP-alpha-D-galacturonate. In terms of biological role, catalyzes the interconversion of UDP-D-glucuronic acid (UDP-GlcA) and UDP-D-galacturonic acid (UDP-GalA). The polypeptide is UDP-glucuronate 4-epimerase (Thermodesulfobacterium geofontis (strain OPF15)).